The sequence spans 219 residues: tRNA (guanine-N(7)-)-methyltransferase (219 aa).

Residues glutamate 46, glutamate 71, asparagine 100, and aspartate 122 each contribute to the S-adenosyl-L-methionine site. Aspartate 122 is a catalytic residue. Substrate-binding positions include lysine 126, aspartate 158, and 199–202; that span reads TEYE.

The protein belongs to the class I-like SAM-binding methyltransferase superfamily. TrmB family.

The enzyme catalyses guanosine(46) in tRNA + S-adenosyl-L-methionine = N(7)-methylguanosine(46) in tRNA + S-adenosyl-L-homocysteine. Its pathway is tRNA modification; N(7)-methylguanine-tRNA biosynthesis. Functionally, catalyzes the formation of N(7)-methylguanine at position 46 (m7G46) in tRNA. The polypeptide is tRNA (guanine-N(7)-)-methyltransferase (Leuconostoc citreum (strain KM20)).